A 438-amino-acid polypeptide reads, in one-letter code: Dihydrolipoyllysine-residue acetyltransferase component of pyruvate dehydrogenase complex (438 aa).

The Lipoyl-binding domain maps to 1-76; it reads MFKVKFADIG…KVGDVVMEIE (76 aa). An N6-lipoyllysine modification is found at Lys42. Residues 132-169 form the Peripheral subunit-binding (PSBD) domain; the sequence is KATPLARKVAADLNIDLSLVTPTGPNQRILVADIKNHQ. Over residues 172–181 the composition is skewed to polar residues; the sequence is STQLASQPIS. The interval 172–192 is disordered; it reads STQLASQPISQPAPTPSPSAH. His411 is an active-site residue.

Belongs to the 2-oxoacid dehydrogenase family. In terms of assembly, forms a 24-polypeptide structural core with octahedral symmetry. It depends on (R)-lipoate as a cofactor.

The enzyme catalyses N(6)-[(R)-dihydrolipoyl]-L-lysyl-[protein] + acetyl-CoA = N(6)-[(R)-S(8)-acetyldihydrolipoyl]-L-lysyl-[protein] + CoA. In terms of biological role, the pyruvate dehydrogenase complex catalyzes the overall conversion of pyruvate to acetyl-CoA and CO(2). It contains multiple copies of three enzymatic components: pyruvate dehydrogenase (E1), dihydrolipoamide acetyltransferase (E2) and lipoamide dehydrogenase (E3). This chain is Dihydrolipoyllysine-residue acetyltransferase component of pyruvate dehydrogenase complex (pdhC), found in Mycoplasma capricolum subsp. capricolum (strain California kid / ATCC 27343 / NCTC 10154).